The primary structure comprises 1220 residues: Plasma membrane calcium-transporting ATPase 1 (1220 aa).

At glycine 2 the chain carries N-acetylglycine. Topologically, residues 2-105 (GDMANNSVVY…KTFLQLVWEA (104 aa)) are cytoplasmic. Phosphoserine is present on residues serine 8 and serine 17. A helical membrane pass occupies residues 106–126 (LQDVTLIILEIAAIVSLGLSF). The Extracellular portion of the chain corresponds to 127 to 154 (YQPPEGDNALCGEVSVGEEEGEGETGWI). Residues 155–175 (EGAAILLSVVCVVLVTAFNDW) form a helical membrane-spanning segment. Topologically, residues 176-366 (SKEKQFRGLQ…KEKSVLQGKL (191 aa)) are cytoplasmic. Residues 297–356 (EEEKKDEKKKEKKNKKQDGAIENRNKAKAQDGEPMEMQPLKSEEGGDGDEKDKKKANLPK) form a disordered region. Composition is skewed to basic and acidic residues over residues 312-327 (KQDG…KAQD) and 337-356 (KSEE…NLPK). At serine 338 the chain carries Phosphoserine. The chain crosses the membrane as a helical span at residues 367 to 386 (TKLAVQIGKAGLLMSAITVI). Residues 387-418 (ILVLYFLIDTFWVQKRPWLAECTPIYIQYFVK) lie on the Extracellular side of the membrane. Residues 419-439 (FFIIGVTVLVVAVPEGLPLPV) form a helical membrane-spanning segment. The Cytoplasmic segment spans residues 440–855 (TISLAYSVNE…RNVYDSISKF (416 aa)). The 4-aspartylphosphate intermediate role is filled by aspartate 475. Positions 475, 477, and 797 each coordinate Mg(2+). A helical membrane pass occupies residues 856 to 876 (LQFQLTVNVVAVIVAFTGACI). The Extracellular segment spans residues 877 to 882 (TQDSPL). A helical membrane pass occupies residues 883-903 (KAVQMLWVNLIMDTLASLALA). Over 904 to 927 (TEPPTESLLLGKPYGRNKPLISRT) the chain is Cytoplasmic. Residues 928–948 (MMKNILGHAFYQLVVVFTLLL) form a helical membrane-spanning segment. Residues 949-971 (AGEKFFDIDSGRNAPLHAPPSEH) lie on the Extracellular side of the membrane. The helical transmembrane segment at 972 to 991 (YTIVFNIFVLMQLFNEINAR) threads the bilayer. At 992-1005 (KIHGERNVFEGIFN) the chain is on the cytoplasmic side. A helical transmembrane segment spans residues 1006-1027 (NAIFCTIVLGTFVVQIIIVQFA). Residues 1028–1039 (GKPFSCSELSVE) are Extracellular-facing. Residues 1040-1060 (QWLWSIFLGMGTLLWGQLIST) form a helical membrane-spanning segment. At 1061–1220 (IPTSRLKFQK…SPLHSLETSL (160 aa)) the chain is on the cytoplasmic side. The calmodulin-binding subdomain A stretch occupies residues 1100 to 1117 (LRRWQILWFRGLNRIQTQ). Threonine 1116 is modified (phosphothreonine; by PKC). The interval 1118–1220 (IRVVNAFRSS…SPLHSLETSL (103 aa)) is required for basolateral membrane targeting. 2 positions are modified to phosphoserine: serine 1140 and serine 1155. Positions 1160–1220 (PLIDDTDAED…SPLHSLETSL (61 aa)) are disordered. Threonine 1165 carries the phosphothreonine modification. Serine 1177 carries the phosphoserine; by PKA modification. Serine 1178 and serine 1182 each carry phosphoserine. Residues 1200 to 1220 (MNKSATSSSPGSPLHSLETSL) show a composition bias toward polar residues.

Belongs to the cation transport ATPase (P-type) (TC 3.A.3) family. Type IIB subfamily. Monomer. Dimer. Oligomer. Calmodulin binding. Interacts with PDZD11. Interacts with SLC35G1 and STIM1. Interacts with YWHAE; interacts with the monomeric and dimeric forms of the YWHAE but prefer the monomer form; this interaction inhibits calcium-transporting ATPase activity. Interacts with NPTN; this interaction stabilizes ATP2B1 and increases ATPase activity; this interaction controls T cell calcium homeostasis following T cell activation. Interacts with EPB41; regulates small intestinal calcium absorption through regulation of membrane expression of ATP2B1. In terms of tissue distribution, isoform B is ubiquitously expressed and is the most predominant isoform. Isoform C is expressed at much lower levels in all tissues tested, but liver, while isoform A is found only in aorta, brain and stomach.

The protein localises to the cell membrane. It is found in the basolateral cell membrane. It localises to the synapse. Its subcellular location is the presynaptic cell membrane. The protein resides in the cytoplasmic vesicle. The protein localises to the secretory vesicle. It is found in the synaptic vesicle membrane. It catalyses the reaction Ca(2+)(in) + ATP + H2O = Ca(2+)(out) + ADP + phosphate + H(+). In terms of biological role, catalyzes the hydrolysis of ATP coupled with the transport of calcium from the cytoplasm to the extracellular space thereby maintaining intracellular calcium homeostasis. Plays a role in blood pressure regulation through regulation of intracellular calcium concentration and nitric oxide production leading to regulation of vascular smooth muscle cells vasoconstriction. Positively regulates bone mineralization through absorption of calcium from the intestine. Plays dual roles in osteoclast differentiation and survival by regulating RANKL-induced calcium oscillations in preosteoclasts and mediating calcium extrusion in mature osteoclasts. Regulates insulin sensitivity through calcium/calmodulin signaling pathway by regulating AKT1 activation and NOS3 activation in endothelial cells. May play a role in synaptic transmission by modulating calcium and proton dynamics at the synaptic vesicles. This Oryctolagus cuniculus (Rabbit) protein is Plasma membrane calcium-transporting ATPase 1.